The primary structure comprises 284 residues: Fructosamine kinase FrlD (284 aa).

It belongs to the carbohydrate kinase PfkB family.

Its function is as follows. Catalyzes the phosphorylation of a range of fructosamines to fructosamine 6-phosphates. In Bacillus subtilis (strain 168), this protein is Fructosamine kinase FrlD (frlD).